Consider the following 485-residue polypeptide: Glutamate--tRNA ligase (485 aa).

Residues 11–21 carry the 'HIGH' region motif; the sequence is PSPTGYMHVGN. Zn(2+) is bound by residues Cys-108, Cys-110, Cys-135, and Asp-137. A 'KMSKS' region motif is present at residues 252 to 256; that stretch reads KLSKR. Lys-255 is an ATP binding site.

It belongs to the class-I aminoacyl-tRNA synthetase family. Glutamate--tRNA ligase type 1 subfamily. As to quaternary structure, monomer. It depends on Zn(2+) as a cofactor.

It localises to the cytoplasm. The enzyme catalyses tRNA(Glu) + L-glutamate + ATP = L-glutamyl-tRNA(Glu) + AMP + diphosphate. Functionally, catalyzes the attachment of glutamate to tRNA(Glu) in a two-step reaction: glutamate is first activated by ATP to form Glu-AMP and then transferred to the acceptor end of tRNA(Glu). In Clostridium botulinum (strain ATCC 19397 / Type A), this protein is Glutamate--tRNA ligase.